Reading from the N-terminus, the 281-residue chain is 3-hydroxyanthranilate 3,4-dioxygenase (281 aa).

The domain A (catalytic) stretch occupies residues 1–162 (MAGVTAIEIP…SNEFKTGKPG (162 aa)). Arg45 is a binding site for O2. Fe cation-binding residues include His49, Glu55, and His93. Substrate is bound at residue Glu55. Positions 97 and 107 each coordinate substrate. Positions 163 to 179 (KGTFACNAPYEARWTDL) are linker. The domain B stretch occupies residues 180–281 (PVPINRKEFI…GFAITIRMPG (102 aa)).

Belongs to the 3-HAO family. Fe(2+) serves as cofactor.

The protein localises to the cytoplasm. It carries out the reaction 3-hydroxyanthranilate + O2 = (2Z,4Z)-2-amino-3-carboxymuconate 6-semialdehyde. It participates in cofactor biosynthesis; NAD(+) biosynthesis; quinolinate from L-kynurenine: step 3/3. Catalyzes the oxidative ring opening of 3-hydroxyanthranilate to 2-amino-3-carboxymuconate semialdehyde, which spontaneously cyclizes to quinolinate. The chain is 3-hydroxyanthranilate 3,4-dioxygenase (haao-1) from Caenorhabditis briggsae.